The primary structure comprises 203 residues: Dual-action ribosomal maturation protein DarP (203 aa).

Disordered stretches follow at residues 1–31 and 183–203; these read MRPM…SKSQ and GASD…DDEA. Over residues 186-203 the composition is skewed to acidic residues; it reads DSDDEAAGDAGDDHDDEA.

The protein belongs to the DarP family.

The protein localises to the cytoplasm. In terms of biological role, member of a network of 50S ribosomal subunit biogenesis factors which assembles along the 30S-50S interface, preventing incorrect 23S rRNA structures from forming. Promotes peptidyl transferase center (PTC) maturation. The sequence is that of Dual-action ribosomal maturation protein DarP from Burkholderia cenocepacia (strain ATCC BAA-245 / DSM 16553 / LMG 16656 / NCTC 13227 / J2315 / CF5610) (Burkholderia cepacia (strain J2315)).